The following is a 229-amino-acid chain: Potassium/proton antiporter CemA (229 aa).

The next 4 helical transmembrane spans lie at 7–27 (FTPL…SFSF), 114–134 (IISF…LVVL), 154–174 (ILLL…ELMI), and 189–209 (IISG…KYWI).

It belongs to the CemA family.

The protein localises to the plastid. It localises to the chloroplast inner membrane. The catalysed reaction is K(+)(in) + H(+)(out) = K(+)(out) + H(+)(in). Contributes to K(+)/H(+) antiport activity by supporting proton efflux to control proton extrusion and homeostasis in chloroplasts in a light-dependent manner to modulate photosynthesis. Prevents excessive induction of non-photochemical quenching (NPQ) under continuous-light conditions. Indirectly promotes efficient inorganic carbon uptake into chloroplasts. The chain is Potassium/proton antiporter CemA from Nandina domestica (Heavenly bamboo).